The chain runs to 367 residues: Phosphoribosylaminoimidazole-succinocarboxamide synthase (367 aa).

Belongs to the SAICAR synthetase family.

It carries out the reaction 5-amino-1-(5-phospho-D-ribosyl)imidazole-4-carboxylate + L-aspartate + ATP = (2S)-2-[5-amino-1-(5-phospho-beta-D-ribosyl)imidazole-4-carboxamido]succinate + ADP + phosphate + 2 H(+). The protein operates within purine metabolism; IMP biosynthesis via de novo pathway; 5-amino-1-(5-phospho-D-ribosyl)imidazole-4-carboxamide from 5-amino-1-(5-phospho-D-ribosyl)imidazole-4-carboxylate: step 1/2. The protein is Phosphoribosylaminoimidazole-succinocarboxamide synthase of Vibrio parahaemolyticus serotype O3:K6 (strain RIMD 2210633).